The primary structure comprises 293 residues: MAIVSAEKFVQAARKNGYAVGGFNTNNLEWTQAILRAAEAKQAPVLIQTSMGAAKYMGGYKVCQSLITNLVESMGITVPVAIHLDHGHYEDALECIEVGYTSIMFDGSHLPVEENLAKTAEVVKIAHAKGVSVEAEVGTIGGEEDGIIGKGELAPIEDAKAMVETGIDFLAAGIGNIHGPYPENWEGLALDHLEKLTAAVPGFPIVLHGGSGIPDDQIKEAIRLGVAKVNVNTESQIAFSNATREFARNYEANEAEYDGKKLFDPRKFLAPGMKAVQGAVEERIDVFGSANKA.

S50 provides a ligand contact to D-glyceraldehyde 3-phosphate. D85 functions as the Proton donor in the catalytic mechanism. The Zn(2+) site is built by H86, D106, E136, and H178. G179 is a dihydroxyacetone phosphate binding site. H208 is a binding site for Zn(2+). Dihydroxyacetone phosphate contacts are provided by residues 209-211 (GGS) and 230-233 (NVNT).

The protein belongs to the class II fructose-bisphosphate aldolase family. Zn(2+) serves as cofactor.

It carries out the reaction beta-D-fructose 1,6-bisphosphate = D-glyceraldehyde 3-phosphate + dihydroxyacetone phosphate. It participates in carbohydrate degradation; glycolysis; D-glyceraldehyde 3-phosphate and glycerone phosphate from D-glucose: step 4/4. In terms of biological role, catalyzes the aldol condensation of dihydroxyacetone phosphate (DHAP or glycerone-phosphate) with glyceraldehyde 3-phosphate (G3P) to form fructose 1,6-bisphosphate (FBP) in gluconeogenesis and the reverse reaction in glycolysis. The chain is Fructose-bisphosphate aldolase (fba) from Streptococcus pyogenes serotype M3 (strain ATCC BAA-595 / MGAS315).